Here is a 370-residue protein sequence, read N- to C-terminus: Protein RecA (370 aa).

Positions 1–20 (MSFEERRKKDSKESSSKEKD) are disordered. 78 to 85 (GPESSGKT) lines the ATP pocket.

The protein belongs to the RecA family.

The protein resides in the cytoplasm. Can catalyze the hydrolysis of ATP in the presence of single-stranded DNA, the ATP-dependent uptake of single-stranded DNA by duplex DNA, and the ATP-dependent hybridization of homologous single-stranded DNAs. It interacts with LexA causing its activation and leading to its autocatalytic cleavage. The sequence is that of Protein RecA from Prochlorococcus marinus (strain MIT 9515).